The sequence spans 226 residues: Uracil-DNA glycosylase (226 aa).

The Proton acceptor role is filled by aspartate 64.

It belongs to the uracil-DNA glycosylase (UDG) superfamily. UNG family.

The protein localises to the cytoplasm. It catalyses the reaction Hydrolyzes single-stranded DNA or mismatched double-stranded DNA and polynucleotides, releasing free uracil.. Functionally, excises uracil residues from the DNA which can arise as a result of misincorporation of dUMP residues by DNA polymerase or due to deamination of cytosine. The protein is Uracil-DNA glycosylase of Photorhabdus laumondii subsp. laumondii (strain DSM 15139 / CIP 105565 / TT01) (Photorhabdus luminescens subsp. laumondii).